Here is a 279-residue protein sequence, read N- to C-terminus: Protein BASIC PENTACYSTEINE2 (279 aa).

Residues 126–167 (TKKRKTNAKAGSTPKAKKPRKPKDENSNNNNNNNTNVTRVKP) are disordered. Over residues 152 to 161 (SNNNNNNNTN) the composition is skewed to low complexity.

This sequence belongs to the BBR/BPC family. As to expression, expressed in seedlings, leaves and pistils. Detected in the base of flowers and tips of carpels, in sepal and petal vasculature, in pollen grains, in young rosette, in the lateral and tip of primary roots, and in ovule at the exception of the outer integument.

The protein localises to the nucleus. Transcriptional regulator that specifically binds to GA-rich elements (GAGA-repeats) present in regulatory sequences of genes involved in developmental processes. This chain is Protein BASIC PENTACYSTEINE2, found in Arabidopsis thaliana (Mouse-ear cress).